Consider the following 164-residue polypeptide: Phosphopantetheine adenylyltransferase (164 aa).

Substrate is bound at residue serine 10. ATP-binding positions include 10-11 (SF) and histidine 18. Lysine 42, threonine 79, and arginine 93 together coordinate substrate. Residues 94–96 (GLR), glutamate 104, and 129–135 (VRPIAAT) contribute to the ATP site.

The protein belongs to the bacterial CoaD family. As to quaternary structure, homohexamer. Requires Mg(2+) as cofactor.

It is found in the cytoplasm. It catalyses the reaction (R)-4'-phosphopantetheine + ATP + H(+) = 3'-dephospho-CoA + diphosphate. The protein operates within cofactor biosynthesis; coenzyme A biosynthesis; CoA from (R)-pantothenate: step 4/5. In terms of biological role, reversibly transfers an adenylyl group from ATP to 4'-phosphopantetheine, yielding dephospho-CoA (dPCoA) and pyrophosphate. The sequence is that of Phosphopantetheine adenylyltransferase from Bradyrhizobium sp. (strain BTAi1 / ATCC BAA-1182).